Reading from the N-terminus, the 482-residue chain is ATP synthase subunit beta (482 aa).

162 to 169 (GGAGVGKT) is a binding site for ATP.

In terms of assembly, F-type ATPases have 2 components, CF(1) - the catalytic core - and CF(0) - the membrane proton channel. CF(1) has five subunits: alpha(3), beta(3), gamma(1), delta(1), epsilon(1). CF(0) has four main subunits: a(1), b(1), b'(1) and c(9-12).

The protein localises to the cellular thylakoid membrane. The catalysed reaction is ATP + H2O + 4 H(+)(in) = ADP + phosphate + 5 H(+)(out). With respect to regulation, inhibited by dicyclohexylcarbodiimide. Produces ATP from ADP in the presence of a proton gradient across the membrane. The catalytic sites are hosted primarily by the beta subunits. In terms of biological role, the complex from the organism is particularly stable to disruption and remains functional after 6 hrs at 55 degrees Celsius. This Thermosynechococcus vestitus (strain NIES-2133 / IAM M-273 / BP-1) protein is ATP synthase subunit beta.